Reading from the N-terminus, the 740-residue chain is MERTYPYAWIIPFIPLPVTVLVGLGLLVVPNATKKIRRMWAFISVLLLSIALLFSINISIQQIGGSSIYQYLWSWTINNDFSLEFGYLIDSLTSIMLILITTVGIMVLIYSDNYMSHDQGYLRFFAYLNFFNASMLGLVTSSNLIQIYIFWELVGMCSYLLIGFWFTRPSAANACQKAFVTNRVGDFGLLLGILGLYWITGSFEFRDLFEIFNILVHNNTINLFFAALCASLLFLGAIAKSAQFPLHVWLPDAMEGPTPISALIHAATMVAAGIFLVARLFPLFINLPYIMYFISLIGIITVLLGATLALAQRDIKRSLAYSTMSQLGYIMLAMGIGSYRAALFHLITHAYSKALLFLGSGSIIHSMEPIVGYSPDKSQNMVLMGGLTKYVPITKTTFLLGTLSLCGIPPLACFWSKDEILNDSWLYSPIFAIIAYSTAGLTAFYMFRVYLLTFDGHLRIHFTNLNGAKSRSLYSISIWGKEESNLNNTNCFLSEINKNDEKVFFFSKKTYKIGKYARNRMFSFSIFFGNEIVFPYPHESDSTMLLSVCVLGLFTLFVGFIGIPLNQGIVDFDILSKWLTPSINLLHKNAHYSVDWYEFVINAIFSVSIALFGIFIASFLYGSVFSSFKSLDLINSFETKGKKRIFLDRILNVIYNWSDNRGYIDTLFSLYLTRNIRKLSELTHSFDKRLIDGITNGVGVASFFVGEGFKYVGGGRISSYLFVYLSYVSVFLVVIYYFVL.

The next 17 membrane-spanning stretches (helical) occupy residues Trp9 to Val29, Trp40 to Ile60, Ile89 to Ile109, Phe125 to Ile145, Ile147 to Thr167, Gly185 to Phe205, Asn219 to Ala239, Thr258 to Ala278, Ile290 to Leu310, Leu327 to Ile347, Ala354 to Ser374, Thr396 to Ser416, Trp425 to Tyr445, Met521 to His538, Leu545 to Leu565, Phe599 to Phe619, and Tyr720 to Leu740.

Belongs to the complex I subunit 5 family. As to quaternary structure, NDH is composed of at least 16 different subunits, 5 of which are encoded in the nucleus.

The protein localises to the plastid. It localises to the chloroplast thylakoid membrane. It catalyses the reaction a plastoquinone + NADH + (n+1) H(+)(in) = a plastoquinol + NAD(+) + n H(+)(out). The catalysed reaction is a plastoquinone + NADPH + (n+1) H(+)(in) = a plastoquinol + NADP(+) + n H(+)(out). NDH shuttles electrons from NAD(P)H:plastoquinone, via FMN and iron-sulfur (Fe-S) centers, to quinones in the photosynthetic chain and possibly in a chloroplast respiratory chain. The immediate electron acceptor for the enzyme in this species is believed to be plastoquinone. Couples the redox reaction to proton translocation, and thus conserves the redox energy in a proton gradient. The sequence is that of NAD(P)H-quinone oxidoreductase subunit 5, chloroplastic (ndhF) from Piper cenocladum (Ant piper).